The sequence spans 83 residues: Weak neurotoxin WNTX33 (83 aa).

The signal sequence occupies residues 1-21; it reads MKTLLLTLVVVTIVCLDLGYS. 4 disulfides stabilise this stretch: cysteine 24-cysteine 45, cysteine 38-cysteine 62, cysteine 64-cysteine 75, and cysteine 76-cysteine 81.

It belongs to the three-finger toxin family. Short-chain subfamily. In terms of tissue distribution, expressed by the venom gland.

The protein resides in the secreted. This chain is Weak neurotoxin WNTX33, found in Ophiophagus hannah (King cobra).